The sequence spans 167 residues: MNTKITNFTFDKKNLNLAEEIIKKYPPHGKRSAILPLLDLAQRQNGGWLPVPAIEYVANMLAMPYIRAYEVATFYTMFNLKRVGKYHIQVCTTTPCWLRGSDDIMKICEKKLGVKLKETTEDQKFTLSEIECLGACVNAPVVQINDDYYEDLTQDKMGKIIDKLQND.

Cys91, Cys96, Cys132, and Cys136 together coordinate [2Fe-2S] cluster.

It belongs to the complex I 24 kDa subunit family. Requires [2Fe-2S] cluster as cofactor.

It carries out the reaction a quinone + NADH + 5 H(+)(in) = a quinol + NAD(+) + 4 H(+)(out). NDH-1 shuttles electrons from NADH, via FMN and iron-sulfur (Fe-S) centers, to quinones in the respiratory chain. Couples the redox reaction to proton translocation (for every two electrons transferred, four hydrogen ions are translocated across the cytoplasmic membrane), and thus conserves the redox energy in a proton gradient. The sequence is that of NADH-quinone oxidoreductase subunit E (nuoE) from Rickettsia conorii (strain ATCC VR-613 / Malish 7).